A 433-amino-acid chain; its full sequence is 3-phosphoshikimate 1-carboxyvinyltransferase (433 aa).

Residues K22, S23, and R27 each contribute to the 3-phosphoshikimate site. K22 is a phosphoenolpyruvate binding site. G94 and R123 together coordinate phosphoenolpyruvate. S168, Q170, D319, and K346 together coordinate 3-phosphoshikimate. A phosphoenolpyruvate-binding site is contributed by Q170. D319 acts as the Proton acceptor in catalysis. Phosphoenolpyruvate is bound by residues R350 and R392.

Belongs to the EPSP synthase family. In terms of assembly, monomer.

The protein resides in the cytoplasm. The catalysed reaction is 3-phosphoshikimate + phosphoenolpyruvate = 5-O-(1-carboxyvinyl)-3-phosphoshikimate + phosphate. The protein operates within metabolic intermediate biosynthesis; chorismate biosynthesis; chorismate from D-erythrose 4-phosphate and phosphoenolpyruvate: step 6/7. Its function is as follows. Catalyzes the transfer of the enolpyruvyl moiety of phosphoenolpyruvate (PEP) to the 5-hydroxyl of shikimate-3-phosphate (S3P) to produce enolpyruvyl shikimate-3-phosphate and inorganic phosphate. The protein is 3-phosphoshikimate 1-carboxyvinyltransferase of Roseiflexus sp. (strain RS-1).